A 69-amino-acid polypeptide reads, in one-letter code: Large ribosomal subunit protein bL28 (69 aa).

The disordered stretch occupies residues 1–27 (MSRRCSVSGKGPLVGNNVSHANNKTKR).

The protein belongs to the bacterial ribosomal protein bL28 family.

The polypeptide is Large ribosomal subunit protein bL28 (Sulfurovum sp. (strain NBC37-1)).